Here is a 916-residue protein sequence, read N- to C-terminus: Protein translocase subunit SecA (916 aa).

ATP contacts are provided by residues Gln86, 104 to 108, and Asp494; that span reads GEGKT. The tract at residues 859 to 916 is disordered; it reads LEAPEKPAQLQYTAPSEGGGTQTRVETRSTGRSGNPAKAAEQDAAKDAAKRPAKKKRR. Positions 880–891 are enriched in polar residues; the sequence is QTRVETRSTGRS. The span at 898 to 908 shows a compositional bias: basic and acidic residues; the sequence is AEQDAAKDAAK.

It belongs to the SecA family. In terms of assembly, monomer and homodimer. Part of the essential Sec protein translocation apparatus which comprises SecA, SecYEG and auxiliary proteins SecDF. Other proteins may also be involved.

Its subcellular location is the cell membrane. The protein localises to the cytoplasm. It carries out the reaction ATP + H2O + cellular proteinSide 1 = ADP + phosphate + cellular proteinSide 2.. Functionally, part of the Sec protein translocase complex. Interacts with the SecYEG preprotein conducting channel. Has a central role in coupling the hydrolysis of ATP to the transfer of proteins into and across the cell membrane, serving as an ATP-driven molecular motor driving the stepwise translocation of polypeptide chains across the membrane. The sequence is that of Protein translocase subunit SecA from Pseudarthrobacter chlorophenolicus (strain ATCC 700700 / DSM 12829 / CIP 107037 / JCM 12360 / KCTC 9906 / NCIMB 13794 / A6) (Arthrobacter chlorophenolicus).